The chain runs to 881 residues: Actin-like protein ARP8 (881 aa).

The segment at 1–150 (MSQEEAESSI…DPAKAPPGKK (150 aa)) is disordered. Composition is skewed to acidic residues over residues 14–33 (EPIDIPLEDDDDEDELEEEN) and 44–54 (ENAENESDDSV). A phosphoserine mark is found at Ser65 and Ser70. Positions 77–114 (ADEEDEDEEGEDEDEDEDDNDVDNEDENDNDNANENEN) are enriched in acidic residues. 502 to 505 (NIGA) contributes to the ATP binding site.

It belongs to the actin family. In terms of assembly, component of the chromatin-remodeling INO80 complex, at least composed of ARP4, ARP5, ARP8, RVB1, RVB2, TAF14, NHP10, IES1, IES3, IES4, IES6, ACT1, IES2, IES5 and INO80. Exists as monomers and dimers, but the dimer is most probably the biologically relevant form required for stable interactions with histones that exploits the twofold symmetry of the nucleosome core.

The protein resides in the nucleus. It is found in the cytoplasm. Its subcellular location is the cytoskeleton. Its function is as follows. Probably involved in transcription regulation via its interaction with the INO80 complex, a chromatin remodeling complex. Exhibits low basal ATPase activity, and unable to polymerize. Strongly prefer nucleosomes and H3-H4 tetramers over H2A-H2B dimers, suggesting it may act as a nucleosome recognition module within the complex. In Saccharomyces cerevisiae (strain ATCC 204508 / S288c) (Baker's yeast), this protein is Actin-like protein ARP8 (ARP8).